The primary structure comprises 235 residues: Transcription factor hepR (235 aa).

Positions 14–45 (QNSPESSRDVLSMASPGLLPIDPSPEHDETNK) are disordered. Residues 175–205 (IQCPCLDERGERCSRMFSRLDNMRDHVRRIH) form a C2H2-type zinc finger.

Its subcellular location is the nucleus. Transcription factor; part of the gene cluster that mediates the biosynthesis of heptelidic acid (HA), a sesquiterpene lactone that acts as an inhibitor of glyceraldehyde-3-phosphatedehydrogenase (GAPDH) and a growth inhibitor of the salt-tolerant lactic acid bacteria in soy sauce brewing. Both hepR and hepS regulate the transcription of the heptelidic acid cluster, but they are not involved in mutual transcriptional regulation and act with different mechanisms. This is Transcription factor hepR from Aspergillus oryzae (strain ATCC 42149 / RIB 40) (Yellow koji mold).